Reading from the N-terminus, the 296-residue chain is Protoheme IX farnesyltransferase (296 aa).

Residues 1-9 (MMFKQYLQV) lie on the Cytoplasmic side of the membrane. Residues 10 to 28 (TKPGIIFGNLISVIGGFLL) form a helical membrane-spanning segment. The Periplasmic segment spans residues 29-37 (ASKGSIDYP). Residues 38–56 (LFIYTLVGVSLVVASGCVF) form a helical membrane-spanning segment. At 57 to 78 (NNYIDRDIDRKMERTKNRVLVK) the chain is on the cytoplasmic side. The helical transmembrane segment at 79–97 (GLISPAVSLVYATLLGFAG) threads the bilayer. Topologically, residues 98 to 107 (FMLLWFGANP) are periplasmic. Residues 108–126 (LACWLGVMGFVVYVGVYSL) form a helical membrane-spanning segment. The Cytoplasmic segment spans residues 127–197 (YMKRHSVYGT…YQAANIPVLP (71 aa)). The chain crosses the membrane as a helical span at residues 198–216 (VVKGISVAKNHITLYIIAF). Over 217-228 (AVATLMLSLGGY) the chain is Periplasmic. A helical transmembrane segment spans residues 229–247 (AGYKYLVVAAAVSVWWLGM). Over 248-268 (ALRGYKVADDRIWARKLFGFS) the chain is Cytoplasmic. Residues 269–287 (IIAITALSVMMSVDFMVPD) traverse the membrane as a helical segment. Topologically, residues 288–296 (SHTLLAAVW) are periplasmic.

This sequence belongs to the UbiA prenyltransferase family. Protoheme IX farnesyltransferase subfamily.

The protein resides in the cell inner membrane. The enzyme catalyses heme b + (2E,6E)-farnesyl diphosphate + H2O = Fe(II)-heme o + diphosphate. The protein operates within porphyrin-containing compound metabolism; heme O biosynthesis; heme O from protoheme: step 1/1. Converts heme B (protoheme IX) to heme O by substitution of the vinyl group on carbon 2 of heme B porphyrin ring with a hydroxyethyl farnesyl side group. The chain is Protoheme IX farnesyltransferase from Shigella sonnei (strain Ss046).